The following is a 275-amino-acid chain: Probable endonuclease 4 (275 aa).

Residues H66, H106, E140, D172, H175, H209, D222, H224, and E254 each contribute to the Zn(2+) site.

It belongs to the AP endonuclease 2 family. The cofactor is Zn(2+).

It catalyses the reaction Endonucleolytic cleavage to 5'-phosphooligonucleotide end-products.. Its function is as follows. Endonuclease IV plays a role in DNA repair. It cleaves phosphodiester bonds at apurinic or apyrimidinic (AP) sites, generating a 3'-hydroxyl group and a 5'-terminal sugar phosphate. This is Probable endonuclease 4 from Halobacterium salinarum (strain ATCC 29341 / DSM 671 / R1).